Reading from the N-terminus, the 148-residue chain is Lysozyme-like protein 6 (148 aa).

The signal sequence occupies residues 1–19; that stretch reads MTSPLLISLASCLVAVNQA. Residues 20–148 enclose the C-type lysozyme domain; the sequence is SLIGRCDLAK…SYWMTGCHLA (129 aa). 4 disulfide bridges follow: Cys-25–Cys-145, Cys-49–Cys-133, Cys-83–Cys-98, and Cys-94–Cys-112. Catalysis depends on residues Glu-54 and Asp-71.

This sequence belongs to the glycosyl hydrolase 22 family. In terms of assembly, monomer.

Its subcellular location is the secreted. It localises to the cell surface. It is found in the cell projection. The protein localises to the cilium. The protein resides in the flagellum. It catalyses the reaction Hydrolysis of (1-&gt;4)-beta-linkages between N-acetylmuramic acid and N-acetyl-D-glucosamine residues in a peptidoglycan and between N-acetyl-D-glucosamine residues in chitodextrins.. In terms of biological role, may be involved sperm-egg plasma membrane adhesion and fusion during fertilization. Exhibits bacteriolytic activity in vitro against Micrococcus luteus and Staphylococcus aureus. Shows weak bacteriolytic activity against Gram-positive bacteria at physiological pH. Bacteriolytic activity is pH-dependent, with a maximum at around pH 5.6. The chain is Lysozyme-like protein 6 (LYZL6) from Bos taurus (Bovine).